The following is a 459-amino-acid chain: Sorting nexin-8 (459 aa).

The segment at 1-53 (MTGGAMDPLPTAPGAAAAEAEVDEEADPPAADSPVPPVSEPRAPDAGQMQVPP) is disordered. Positions 68–176 (ARDAVQVELV…KLFLSFSGPD (109 aa)) constitute a PX domain. Arg-104, Lys-130, and Arg-143 together coordinate a 1,2-diacyl-sn-glycero-3-phospho-(1D-myo-inositol-3-phosphate).

It belongs to the sorting nexin family.

The protein resides in the early endosome membrane. May be involved in several stages of intracellular trafficking. May play a role in intracellular protein transport from early endosomes to the trans-Golgi network. The sequence is that of Sorting nexin-8 (SNX8) from Bos taurus (Bovine).